The chain runs to 125 residues: Small ribosomal subunit protein uS12m (125 aa).

The tract at residues 1 to 27 (MPTKNQLIRHGREEKRRTDRTRALDQC) is disordered. A compositionally biased stretch (basic and acidic residues) spans 10–23 (HGREEKRRTDRTRA).

Belongs to the universal ribosomal protein uS12 family.

It is found in the mitochondrion. Functionally, protein S12 is involved in the translation initiation step. This chain is Small ribosomal subunit protein uS12m (RPS12), found in Triticum aestivum (Wheat).